A 572-amino-acid polypeptide reads, in one-letter code: Probable serine/threonine-protein kinase At1g54610 (572 aa).

A disordered region spans residues 1 to 89 (MGCVFGREAA…SNPSKHWRGE (89 aa)). A compositionally biased stretch (low complexity) spans 9–40 (AATTTTAEAKQAKSSKASSGVVVVGESSVTKS). Positions 47–67 (DVEKKKNEEANGDKERKSSKG) are enriched in basic and acidic residues. Over residues 74-83 (KPNPRLSNPS) the composition is skewed to polar residues. A Protein kinase domain is found at 118 to 402 (FEKIDKIGQG…ASAALKSEFF (285 aa)). ATP contacts are provided by residues 124–132 (IGQGTYSNV) and Lys147. Asp242 serves as the catalytic Proton acceptor. Disordered regions lie at residues 409 to 474 (CEPA…NVDR) and 526 to 572 (SSFN…AVVA). A compositionally biased stretch (basic and acidic residues) spans 419-434 (PSKEIDAKRRDEETRR). Over residues 554-572 (SRKKKDNTKSSKGKRAVVA) the composition is skewed to basic residues.

This sequence belongs to the protein kinase superfamily. Ser/Thr protein kinase family.

The enzyme catalyses L-seryl-[protein] + ATP = O-phospho-L-seryl-[protein] + ADP + H(+). It catalyses the reaction L-threonyl-[protein] + ATP = O-phospho-L-threonyl-[protein] + ADP + H(+). The chain is Probable serine/threonine-protein kinase At1g54610 from Arabidopsis thaliana (Mouse-ear cress).